Reading from the N-terminus, the 526-residue chain is MEAEESESFSYPMLLPSDGLYPEDDDDADMDQDKNPEENVMNEKEDEDVDAVDEKSGEEDVEMDTMEDENENDEDTEQTSEKKETEETPKENPLEKLKQKASTASFYDVVPTLAIPMATSINAFAFTSDLKWLFTGGEDGYIRKYDFFPSINGDLSLTVAQRHPFVDTVTKAGILLNYWENAYDGNKPSSVYSLAAHSRGLWVLSGVNNGDIILYSTRHQEGYPVTSLKKHTAPVSCLALHGSEKKVLSGSWDKMVYYWDLNTGDAISTYNCESGQISNIVYRPSGAVNPWGSESDDMRSLFGTPASSSSYDALFDEEVEKAIEEETKSVQANEENETEKPSQTESTTNNDNIKAPSESSSEESNIFLTTSIDGVMNVWDHRMVDSVLKYPVPKGVPPWAMSACWSPDGNNIYIGRRNGIVEEYNIHSGKEPVRSLKMPLDSGPVSNVYSMPNGRHLVISSFDNIRLYDLQSKAGIGFLIIPGHHGGLVSSLYVDTSCQFMFSASGNRGWQGTTTEVFLGYQIMTS.

Residues 1–98 (MEAEESESFS…PKENPLEKLK (98 aa)) are disordered. The span at 21–30 (YPEDDDDADM) shows a compositional bias: acidic residues. The segment covering 31-43 (DQDKNPEENVMNE) has biased composition (basic and acidic residues). The segment covering 44-78 (KEDEDVDAVDEKSGEEDVEMDTMEDENENDEDTEQ) has biased composition (acidic residues). The span at 79-98 (TSEKKETEETPKENPLEKLK) shows a compositional bias: basic and acidic residues. WD repeat units lie at residues 116 to 155 (PMAT…NGDL), 186 to 225 (NKPS…GYPV), 230 to 271 (KHTA…STYN), 348 to 389 (TNND…SVLK), 395 to 434 (GVPP…EPVR), and 440 to 478 (LDSG…GIGF). The disordered stretch occupies residues 327-364 (TKSVQANEENETEKPSQTESTTNNDNIKAPSESSSEES). The segment covering 341–364 (PSQTESTTNNDNIKAPSESSSEES) has biased composition (polar residues).

It belongs to the WD repeat SPT8 family. Component of the 1.8 MDa SAGA (Spt-Ada-Gcn5 acetyltransferase) complex, which is composed of 19 subunits tra1, spt7, taf5, ngg1/ada3, sgf73, spt20, spt8, taf12, taf6, hfi1/ada1, ubp8, gcn5, ada2, spt3, sgf29, taf10, taf9, sgf11 and sus1. The SAGA complex is composed of 4 modules, namely the HAT (histone acetyltransferase) module (gcn5, ada2, ngg1/ada3 and sgf29), the DUB (deubiquitinating) module (ubp8, sgf11, sgf73 and sus1), the core or TAF (TBP-associated factor) module (taf5, taf6, taf9, taf10 and taf12), and the Tra1 or SPT (Suppressor of Ty) module (tra1, hfi1/ada1, spt3, spt7, spt8 and spt20). The Tra1/SPT module binds activators, the core module recruits TBP (TATA-binding protein), the HAT module contains the histone H3 acetyltransferase gcn5, and the DUB module comprises the histone H2B deubiquitinase ubp8.

It is found in the cytoplasm. The protein resides in the nucleus. Component of the transcription coactivator SAGA complex. SAGA acts as a general cofactor required for essentially all RNA polymerase II transcription. At the promoters, SAGA is required for transcription pre-initiation complex (PIC) recruitment. It influences RNA polymerase II transcriptional activity through different activities such as TBP interaction (via core/TAF module) and promoter selectivity, interaction with transcription activators (via Tra1/SPT module), and chromatin modification through histone acetylation (via HAT module) and deubiquitination (via DUB module). SAGA preferentially acetylates histones H3 (to form H3K9ac, H3K14ac, H3K18ac and H3K23ac) and H2B and deubiquitinates histone H2B. SAGA interacts with DNA via upstream activating sequences (UASs). During SAGA-mediated transcriptional inhibition, spt3 and spt8 prevent binding of TBP to the TATA box. As part of the HAT module, involved in positive regulation of matings. The protein is SAGA complex subunit Spt8 (spt8) of Schizosaccharomyces pombe (strain 972 / ATCC 24843) (Fission yeast).